The sequence spans 1298 residues: Phosphoribosylformylglycinamidine synthase (1298 aa).

A disordered region spans residues 298–328 (TAIAPFPGASTGSGGEIRDEGATGRGAKPKA). Residues 305-316 (GASTGSGGEIRD), 384-386 (TGY), and Ala676 contribute to the ATP site. Residues Asp677, Glu716, Asn720, and Asp884 each coordinate Mg(2+). An ATP-binding site is contributed by Ser886. The region spanning 1045-1298 (VAILREQGVN…MFRNARVWVD (254 aa)) is the Glutamine amidotransferase type-1 domain. Cys1138 serves as the catalytic Nucleophile. Catalysis depends on residues His1263 and Glu1265.

It in the N-terminal section; belongs to the FGAMS family. In terms of assembly, monomer.

It localises to the cytoplasm. The enzyme catalyses N(2)-formyl-N(1)-(5-phospho-beta-D-ribosyl)glycinamide + L-glutamine + ATP + H2O = 2-formamido-N(1)-(5-O-phospho-beta-D-ribosyl)acetamidine + L-glutamate + ADP + phosphate + H(+). Its pathway is purine metabolism; IMP biosynthesis via de novo pathway; 5-amino-1-(5-phospho-D-ribosyl)imidazole from N(2)-formyl-N(1)-(5-phospho-D-ribosyl)glycinamide: step 1/2. In terms of biological role, phosphoribosylformylglycinamidine synthase involved in the purines biosynthetic pathway. Catalyzes the ATP-dependent conversion of formylglycinamide ribonucleotide (FGAR) and glutamine to yield formylglycinamidine ribonucleotide (FGAM) and glutamate. The protein is Phosphoribosylformylglycinamidine synthase of Pseudomonas aeruginosa (strain ATCC 15692 / DSM 22644 / CIP 104116 / JCM 14847 / LMG 12228 / 1C / PRS 101 / PAO1).